The primary structure comprises 154 residues: Crossover junction endodeoxyribonuclease RuvC (154 aa).

Active-site residues include aspartate 7, glutamate 67, and aspartate 139. The Mg(2+) site is built by aspartate 7, glutamate 67, and aspartate 139.

The protein belongs to the RuvC family. As to quaternary structure, homodimer which binds Holliday junction (HJ) DNA. The HJ becomes 2-fold symmetrical on binding to RuvC with unstacked arms; it has a different conformation from HJ DNA in complex with RuvA. In the full resolvosome a probable DNA-RuvA(4)-RuvB(12)-RuvC(2) complex forms which resolves the HJ. Mg(2+) serves as cofactor.

Its subcellular location is the cytoplasm. The catalysed reaction is Endonucleolytic cleavage at a junction such as a reciprocal single-stranded crossover between two homologous DNA duplexes (Holliday junction).. Functionally, the RuvA-RuvB-RuvC complex processes Holliday junction (HJ) DNA during genetic recombination and DNA repair. Endonuclease that resolves HJ intermediates. Cleaves cruciform DNA by making single-stranded nicks across the HJ at symmetrical positions within the homologous arms, yielding a 5'-phosphate and a 3'-hydroxyl group; requires a central core of homology in the junction. The consensus cleavage sequence is 5'-(A/T)TT(C/G)-3'. Cleavage occurs on the 3'-side of the TT dinucleotide at the point of strand exchange. HJ branch migration catalyzed by RuvA-RuvB allows RuvC to scan DNA until it finds its consensus sequence, where it cleaves and resolves the cruciform DNA. The sequence is that of Crossover junction endodeoxyribonuclease RuvC from Prochlorococcus marinus (strain MIT 9303).